A 714-amino-acid polypeptide reads, in one-letter code: Phosphoribosylformylglycinamidine synthase subunit PurL (714 aa).

H34 is an active-site residue. Y37 serves as a coordination point for ATP. A Mg(2+)-binding site is contributed by E78. Residues 79–82 and R101 each bind substrate; that span reads SHNH. The active-site Proton acceptor is H80. Position 102 (D102) interacts with Mg(2+). Q226 provides a ligand contact to substrate. D254 provides a ligand contact to Mg(2+). 298-300 lines the substrate pocket; the sequence is ESQ. The ATP site is built by D474 and G511. Position 512 (N512) interacts with Mg(2+). Residue S514 coordinates substrate.

This sequence belongs to the FGAMS family. Monomer. Part of the FGAM synthase complex composed of 1 PurL, 1 PurQ and 2 PurS subunits.

The protein resides in the cytoplasm. The catalysed reaction is N(2)-formyl-N(1)-(5-phospho-beta-D-ribosyl)glycinamide + L-glutamine + ATP + H2O = 2-formamido-N(1)-(5-O-phospho-beta-D-ribosyl)acetamidine + L-glutamate + ADP + phosphate + H(+). The protein operates within purine metabolism; IMP biosynthesis via de novo pathway; 5-amino-1-(5-phospho-D-ribosyl)imidazole from N(2)-formyl-N(1)-(5-phospho-D-ribosyl)glycinamide: step 1/2. In terms of biological role, part of the phosphoribosylformylglycinamidine synthase complex involved in the purines biosynthetic pathway. Catalyzes the ATP-dependent conversion of formylglycinamide ribonucleotide (FGAR) and glutamine to yield formylglycinamidine ribonucleotide (FGAM) and glutamate. The FGAM synthase complex is composed of three subunits. PurQ produces an ammonia molecule by converting glutamine to glutamate. PurL transfers the ammonia molecule to FGAR to form FGAM in an ATP-dependent manner. PurS interacts with PurQ and PurL and is thought to assist in the transfer of the ammonia molecule from PurQ to PurL. The protein is Phosphoribosylformylglycinamidine synthase subunit PurL of Methanothermobacter thermautotrophicus (strain ATCC 29096 / DSM 1053 / JCM 10044 / NBRC 100330 / Delta H) (Methanobacterium thermoautotrophicum).